The following is a 301-amino-acid chain: Probable serine acetyltransferase 3 (301 aa).

Residues 280–301 (IGKKAEPQRELPGVTMEQRWSD) are disordered.

It belongs to the transferase hexapeptide repeat family. Homomultimer.

The catalysed reaction is L-serine + acetyl-CoA = O-acetyl-L-serine + CoA. It participates in amino-acid biosynthesis; L-cysteine biosynthesis; L-cysteine from L-serine: step 1/2. The polypeptide is Probable serine acetyltransferase 3 (SAT3) (Oryza sativa subsp. japonica (Rice)).